We begin with the raw amino-acid sequence, 445 residues long: MKKYSICIVGGGSRYTPDMLAMLCNQKERFPLRKIVLYDNESERQETVGNYAKILFKEYYPELEEVIWTTDEKEAFEDIDFALMQIRAGRLKMREKDEKISLKHGCLGQETCGAGGFAYGLRSVPAVIDLIKSIRTYSPKCWILNYSNPAAIVAEATKRVFPNDYRIINICDMPIAIMDIYAAVLGLKRRDLEPKYFGLNHFGWFTHILDKKTGENYLPKLREILKTPVDVQTEPLFQEKSWKSTFEFMSQMINDYDEYLPNTYLQYYLYPAKMRNKENPEYTRANEVMDGNEKETYERMHKIISLGKIHGTKYELTSDVGCHAEYIVDLATAIANNTNEIFLIITENKGTINNVSKDMMVEVPCRVGSNGVEPLVVGSIPAFYKGLMENQYAYEKLSVDACLEGSYQKALQALVLNRTVVNTDVAKELLKDLIEANKGYWNELH.

4 to 71 (YSICIVGGGS…ELEEVIWTTD (68 aa)) is an NAD(+) binding site. Substrate is bound by residues arginine 94 and asparagine 148. Position 171 (cysteine 171) interacts with Mn(2+). Aspartate 172 acts as the Proton donor in catalysis. Histidine 201 is a Mn(2+) binding site. The Proton acceptor role is filled by tyrosine 264. Arginine 284 lines the substrate pocket.

It belongs to the glycosyl hydrolase 4 family. Homotetramer. NAD(+) serves as cofactor. Requires Mn(2+) as cofactor.

Phospho-alpha-glucosidase that catalyzes the hydrolysis of p-nitrophenyl-alpha-D-glucopyranoside 6-phosphate, but is not able to cleave 'natural' phospho-alpha-glucosides produced via the phosphoenolpyruvate-dependent sugar phosphotransferase system (PEP-PTS). This is Phospho-alpha-glucosidase PagL (pagL) from Clostridium acetobutylicum (strain ATCC 824 / DSM 792 / JCM 1419 / IAM 19013 / LMG 5710 / NBRC 13948 / NRRL B-527 / VKM B-1787 / 2291 / W).